The following is a 122-amino-acid chain: Large ribosomal subunit protein uL14 (122 aa).

The protein belongs to the universal ribosomal protein uL14 family. In terms of assembly, part of the 50S ribosomal subunit. Forms a cluster with proteins L3 and L19. In the 70S ribosome, L14 and L19 interact and together make contacts with the 16S rRNA in bridges B5 and B8.

Its function is as follows. Binds to 23S rRNA. Forms part of two intersubunit bridges in the 70S ribosome. The sequence is that of Large ribosomal subunit protein uL14 from Pseudomonas aeruginosa (strain LESB58).